The following is a 360-amino-acid chain: GDSL esterase/lipase At1g58430 (360 aa).

An N-terminal signal peptide occupies residues 1–23 (MWTSKTISFTLFITTTLLGSCNA). N-linked (GlcNAc...) asparagine glycosylation occurs at Asn22. Ser42 functions as the Nucleophile in the catalytic mechanism. N-linked (GlcNAc...) asparagine glycosylation is found at Asn104 and Asn326. Catalysis depends on residues Asp334 and His337.

The protein belongs to the 'GDSL' lipolytic enzyme family.

The protein resides in the secreted. This Arabidopsis thaliana (Mouse-ear cress) protein is GDSL esterase/lipase At1g58430.